The chain runs to 73 residues: Large ribosomal subunit protein uL29 (73 aa).

Belongs to the universal ribosomal protein uL29 family.

The sequence is that of Large ribosomal subunit protein uL29 from Synechococcus sp. (strain JA-2-3B'a(2-13)) (Cyanobacteria bacterium Yellowstone B-Prime).